A 388-amino-acid polypeptide reads, in one-letter code: Palmitoyltransferase ZDHHC18-B (388 aa).

Residues Met1–Arg33 form a disordered region. At Met1–Gln58 the chain is on the cytoplasmic side. Residues Ser59–Phe79 traverse the membrane as a helical segment. The Lumenal portion of the chain corresponds to Asp80–His87. A helical membrane pass occupies residues Leu88–Leu108. Residues Gln109–Arg205 lie on the Cytoplasmic side of the membrane. The DHHC domain maps to Lys162–Val212. The active-site S-palmitoyl cysteine intermediate is the Cys192. The helical transmembrane segment at Phe206 to Thr226 threads the bilayer. At Thr227–Leu253 the chain is on the lumenal side. A helical transmembrane segment spans residues Val254–Val274. Residues Ala275 to Ala388 lie on the Cytoplasmic side of the membrane.

Belongs to the DHHC palmitoyltransferase family. ERF2/ZDHHC9 subfamily.

It localises to the golgi apparatus membrane. The catalysed reaction is L-cysteinyl-[protein] + hexadecanoyl-CoA = S-hexadecanoyl-L-cysteinyl-[protein] + CoA. Palmitoyltransferase that catalyzes the addition of palmitate onto various protein substrates, such as CGAS, HRAS and LCK. This chain is Palmitoyltransferase ZDHHC18-B, found in Danio rerio (Zebrafish).